The primary structure comprises 201 residues: ATP-dependent Clp protease proteolytic subunit (201 aa).

The Nucleophile role is filled by Ser-98. Residue His-123 is part of the active site.

This sequence belongs to the peptidase S14 family. Fourteen ClpP subunits assemble into 2 heptameric rings which stack back to back to give a disk-like structure with a central cavity, resembling the structure of eukaryotic proteasomes.

It localises to the cytoplasm. It carries out the reaction Hydrolysis of proteins to small peptides in the presence of ATP and magnesium. alpha-casein is the usual test substrate. In the absence of ATP, only oligopeptides shorter than five residues are hydrolyzed (such as succinyl-Leu-Tyr-|-NHMec, and Leu-Tyr-Leu-|-Tyr-Trp, in which cleavage of the -Tyr-|-Leu- and -Tyr-|-Trp bonds also occurs).. Functionally, cleaves peptides in various proteins in a process that requires ATP hydrolysis. Has a chymotrypsin-like activity. Plays a major role in the degradation of misfolded proteins. In Desulfatibacillum aliphaticivorans, this protein is ATP-dependent Clp protease proteolytic subunit.